We begin with the raw amino-acid sequence, 256 residues long: 1-(5-phosphoribosyl)-5-[(5-phosphoribosylamino)methylideneamino] imidazole-4-carboxamide isomerase (256 aa).

Residue D8 is the Proton acceptor of the active site. D129 functions as the Proton donor in the catalytic mechanism.

This sequence belongs to the HisA/HisF family.

Its subcellular location is the cytoplasm. The enzyme catalyses 1-(5-phospho-beta-D-ribosyl)-5-[(5-phospho-beta-D-ribosylamino)methylideneamino]imidazole-4-carboxamide = 5-[(5-phospho-1-deoxy-D-ribulos-1-ylimino)methylamino]-1-(5-phospho-beta-D-ribosyl)imidazole-4-carboxamide. Its pathway is amino-acid biosynthesis; L-histidine biosynthesis; L-histidine from 5-phospho-alpha-D-ribose 1-diphosphate: step 4/9. The protein is 1-(5-phosphoribosyl)-5-[(5-phosphoribosylamino)methylideneamino] imidazole-4-carboxamide isomerase of Picosynechococcus sp. (strain ATCC 27264 / PCC 7002 / PR-6) (Agmenellum quadruplicatum).